Reading from the N-terminus, the 439-residue chain is Protein dumpy-20 (439 aa).

Residues 93–116 form a disordered region; sequence GTLSDPSLHGSNSSSSTSDVGSSV. Positions 96-116 are enriched in low complexity; that stretch reads SDPSLHGSNSSSSTSDVGSSV. 2 BED-type zinc fingers span residues 135–184 and 349–398; these read PTEN…YQKV and KTEH…YNDV. Zn(2+) is bound by residues Cys-154, Cys-157, His-172, His-177, Cys-368, Cys-371, His-386, and His-391.

Involved in cuticle function and is essential for normal morphological development. The chain is Protein dumpy-20 (dpy-20) from Caenorhabditis briggsae.